A 120-amino-acid polypeptide reads, in one-letter code: Large ribosomal subunit protein bL19 (120 aa).

This sequence belongs to the bacterial ribosomal protein bL19 family.

Its function is as follows. This protein is located at the 30S-50S ribosomal subunit interface and may play a role in the structure and function of the aminoacyl-tRNA binding site. This chain is Large ribosomal subunit protein bL19, found in Dichelobacter nodosus (strain VCS1703A).